Here is a 226-residue protein sequence, read N- to C-terminus: tRNA (guanine-N(7)-)-methyltransferase (226 aa).

Asp-59, Glu-84, and Asp-111 together coordinate S-adenosyl-L-methionine. Substrate is bound at residue Asp-169.

Belongs to the class I-like SAM-binding methyltransferase superfamily. TrmB family.

It carries out the reaction guanosine(46) in tRNA + S-adenosyl-L-methionine = N(7)-methylguanosine(46) in tRNA + S-adenosyl-L-homocysteine. Its pathway is tRNA modification; N(7)-methylguanine-tRNA biosynthesis. Its function is as follows. Catalyzes the formation of N(7)-methylguanine at position 46 (m7G46) in tRNA. The protein is tRNA (guanine-N(7)-)-methyltransferase of Chloroherpeton thalassium (strain ATCC 35110 / GB-78).